The chain runs to 128 residues: Adrenodoxin homolog (128 aa).

One can recognise a 2Fe-2S ferredoxin-type domain in the interval 12–115; it reads EQIRIFFKTM…NAVFTVPRAT (104 aa). [2Fe-2S] cluster is bound by residues C50, C56, C59, and C96.

Belongs to the adrenodoxin/putidaredoxin family. The cofactor is [2Fe-2S] cluster.

It is found in the mitosome. Functionally, ferredoxins are iron-sulfur proteins that transfer electrons in a wide variety of metabolic reactions. In Encephalitozoon cuniculi (strain GB-M1) (Microsporidian parasite), this protein is Adrenodoxin homolog.